Consider the following 509-residue polypeptide: uncharacterized protein (509 aa).

The region spanning G108–I225 is the G domain.

This is an uncharacterized protein from Acinetobacter baylyi (strain ATCC 33305 / BD413 / ADP1).